The following is a 255-amino-acid chain: Large ribosomal subunit protein uL4 (255 aa).

The protein belongs to the universal ribosomal protein uL4 family. In terms of assembly, part of the 50S ribosomal subunit.

Functionally, one of the primary rRNA binding proteins, this protein initially binds near the 5'-end of the 23S rRNA. It is important during the early stages of 50S assembly. It makes multiple contacts with different domains of the 23S rRNA in the assembled 50S subunit and ribosome. In terms of biological role, forms part of the polypeptide exit tunnel. In Thermococcus gammatolerans (strain DSM 15229 / JCM 11827 / EJ3), this protein is Large ribosomal subunit protein uL4.